Consider the following 304-residue polypeptide: Elongation factor Ts (304 aa).

Positions T80 to V83 are involved in Mg(2+) ion dislocation from EF-Tu.

The protein belongs to the EF-Ts family.

The protein resides in the cytoplasm. In terms of biological role, associates with the EF-Tu.GDP complex and induces the exchange of GDP to GTP. It remains bound to the aminoacyl-tRNA.EF-Tu.GTP complex up to the GTP hydrolysis stage on the ribosome. This Clostridium tetani (strain Massachusetts / E88) protein is Elongation factor Ts.